The sequence spans 308 residues: Putative hydrolase MT0526 (308 aa).

The disordered stretch occupies residues 1 to 48 (MMVSSHLGSPDQAGHVDLASPADPPPPDASASHSPVDMPAPVAAAGSD). Asp62 acts as the Nucleophile in catalysis. Mg(2+) is bound by residues Asp62, Asp64, and Asp237. Asp64 acts as the Proton donor in catalysis.

Belongs to the HAD-like hydrolase superfamily. SerB family. Mg(2+) serves as cofactor.

In Mycobacterium tuberculosis (strain CDC 1551 / Oshkosh), this protein is Putative hydrolase MT0526.